Reading from the N-terminus, the 121-residue chain is Large ribosomal subunit protein bL12 (121 aa).

It belongs to the bacterial ribosomal protein bL12 family. In terms of assembly, homodimer. Part of the ribosomal stalk of the 50S ribosomal subunit. Forms a multimeric L10(L12)X complex, where L10 forms an elongated spine to which 2 to 4 L12 dimers bind in a sequential fashion. Binds GTP-bound translation factors.

In terms of biological role, forms part of the ribosomal stalk which helps the ribosome interact with GTP-bound translation factors. Is thus essential for accurate translation. In Ureaplasma parvum serovar 3 (strain ATCC 27815 / 27 / NCTC 11736), this protein is Large ribosomal subunit protein bL12.